The primary structure comprises 214 residues: uncharacterized protein (214 aa).

The next 4 membrane-spanning stretches (helical) occupy residues 10 to 30 (IPPLAVYLLVSGVVGVESLGI), 55 to 75 (IGVGVVAVIGAAVGDSIGYAI), 147 to 167 (VSGAICWAGGTTALVYFAGMA), and 174 to 194 (RFSWIALIITVVVGIIAAILL).

This sequence belongs to the DedA family.

It is found in the cell membrane. This is an uncharacterized protein from Mycobacterium leprae (strain TN).